Here is a 123-residue protein sequence, read N- to C-terminus: PTS system glucitol/sorbitol-specific EIIA component (123 aa).

The PTS EIIA type-5 domain occupies 1–116 (MTVIYQTTIT…PDDIAPGSVL (116 aa)). H43 serves as the catalytic Tele-phosphohistidine intermediate. H43 carries the phosphohistidine; by HPr modification.

Its subcellular location is the cytoplasm. Functionally, the phosphoenolpyruvate-dependent sugar phosphotransferase system (sugar PTS), a major carbohydrate active transport system, catalyzes the phosphorylation of incoming sugar substrates concomitantly with their translocation across the cell membrane. The enzyme II complex composed of SrlA, SrlB and SrlE is involved in glucitol/sorbitol transport. This Shigella flexneri protein is PTS system glucitol/sorbitol-specific EIIA component (srlB).